A 178-amino-acid polypeptide reads, in one-letter code: Hypoxanthine-guanine phosphoribosyltransferase (178 aa).

2 residues coordinate diphosphate: Lys46 and Gly47. Asp103 is a Mg(2+) binding site. Asp106 functions as the Proton acceptor in the catalytic mechanism. GMP contacts are provided by residues Lys134, 155–156 (FL), and Asp162. Position 168 (Arg168) interacts with diphosphate.

Belongs to the purine/pyrimidine phosphoribosyltransferase family. Mg(2+) is required as a cofactor.

Its subcellular location is the cytoplasm. The catalysed reaction is IMP + diphosphate = hypoxanthine + 5-phospho-alpha-D-ribose 1-diphosphate. It carries out the reaction GMP + diphosphate = guanine + 5-phospho-alpha-D-ribose 1-diphosphate. Its pathway is purine metabolism; IMP biosynthesis via salvage pathway; IMP from hypoxanthine: step 1/1. It functions in the pathway purine metabolism; GMP biosynthesis via salvage pathway; GMP from guanine: step 1/1. Its function is as follows. Purine salvage pathway enzyme that catalyzes the transfer of the ribosyl-5-phosphate group from 5-phospho-alpha-D-ribose 1-diphosphate (PRPP) to the N9 position of the 6-oxopurines hypoxanthine and guanine to form the corresponding ribonucleotides IMP (inosine 5'-monophosphate) and GMP (guanosine 5'-monophosphate), with the release of PPi. The polypeptide is Hypoxanthine-guanine phosphoribosyltransferase (hpt) (Aquifex aeolicus (strain VF5)).